The following is a 339-amino-acid chain: Glyceraldehyde-3-phosphate dehydrogenase (339 aa).

NAD(+)-binding positions include 13-14, D35, and K84; that span reads RI. D-glyceraldehyde 3-phosphate-binding positions include 156 to 158, T187, 216 to 217, and R239; these read SCT and TG. Residue C157 is the Nucleophile of the active site. Residue N321 participates in NAD(+) binding.

The protein belongs to the glyceraldehyde-3-phosphate dehydrogenase family. Homotetramer.

Its subcellular location is the cytoplasm. It carries out the reaction D-glyceraldehyde 3-phosphate + phosphate + NAD(+) = (2R)-3-phospho-glyceroyl phosphate + NADH + H(+). Its pathway is carbohydrate degradation; glycolysis; pyruvate from D-glyceraldehyde 3-phosphate: step 1/5. This Onchocerca volvulus protein is Glyceraldehyde-3-phosphate dehydrogenase.